The following is a 378-amino-acid chain: Transaldolase 1 (378 aa).

Residue Lys-146 is the Schiff-base intermediate with substrate of the active site.

The protein belongs to the transaldolase family. Type 2 subfamily.

It is found in the cytoplasm. The catalysed reaction is D-sedoheptulose 7-phosphate + D-glyceraldehyde 3-phosphate = D-erythrose 4-phosphate + beta-D-fructose 6-phosphate. It participates in carbohydrate degradation; pentose phosphate pathway; D-glyceraldehyde 3-phosphate and beta-D-fructose 6-phosphate from D-ribose 5-phosphate and D-xylulose 5-phosphate (non-oxidative stage): step 2/3. Functionally, transaldolase is important for the balance of metabolites in the pentose-phosphate pathway. In Streptomyces avermitilis (strain ATCC 31267 / DSM 46492 / JCM 5070 / NBRC 14893 / NCIMB 12804 / NRRL 8165 / MA-4680), this protein is Transaldolase 1.